The chain runs to 668 residues: MKEFKLHASFQPAGDQIAAIDALVRGLHAGARFQTLKGVTGSGKTFTVANVIARVQKPTLVISHNKTLSAQLYREFKGFFPDNAVEYFVSYYDYYQPESYVPARDLYIEKDASINAEINRMRLSATFSLMERRDVIVVATVSCIYGLGLPESWRDLRIHVEVNQCLDLEDLKRQLVSLQYERNDAVLECGRFRVRGDVIEIFPAYLEEFYRIECDWDRVVRIRRIHPVSGAVLREFEELTVYPAKHFVLKEDAIPRAMDRIRQELDERLVQLTQENKLAEAARLKTRTEYDLEMLGEMGYCHGIENYSAPIAGRKSGEPPVTLLHYFPKDFVLFVDESHVTLPQLGAMYEGDRVRKQNLIDFGFRLPCARDNRPLKDSEFEALLNQAVFISATPGVKERTQSVQIVEQLIRPTGLLDPCIEVRKTDGQIEDICQRVKACSARNERSLVLTLTKKMAEDLTDYFNGLGIRTKYVHSEIETIERVEILTSLRAGECEVLVGINLLREGIDLPEVAFIAILDANIVGFLRSTTSLIQIIGRAARNARGTVVMYADAISDAMREAIEETARRRKIQMAYNRAHGITPRTIKKSIEDILVREQEVKKDAARVQVAPLLRAADADVRTHAARKKMVQALRLHMKVCARELRFEEAALIRDKILQLQRQDEQNGV.

Residues 25–414 (RGLHAGARFQ…IVEQLIRPTG (390 aa)) form the Helicase ATP-binding domain. 38-45 (GVTGSGKT) lines the ATP pocket. Residues 91–114 (YYDYYQPESYVPARDLYIEKDASI) carry the Beta-hairpin motif. Residues 431–594 (DICQRVKACS…TIKKSIEDIL (164 aa)) form the Helicase C-terminal domain. The region spanning 627–662 (KKMVQALRLHMKVCARELRFEEAALIRDKILQLQRQ) is the UVR domain.

Belongs to the UvrB family. In terms of assembly, forms a heterotetramer with UvrA during the search for lesions. Interacts with UvrC in an incision complex.

The protein localises to the cytoplasm. Its function is as follows. The UvrABC repair system catalyzes the recognition and processing of DNA lesions. A damage recognition complex composed of 2 UvrA and 2 UvrB subunits scans DNA for abnormalities. Upon binding of the UvrA(2)B(2) complex to a putative damaged site, the DNA wraps around one UvrB monomer. DNA wrap is dependent on ATP binding by UvrB and probably causes local melting of the DNA helix, facilitating insertion of UvrB beta-hairpin between the DNA strands. Then UvrB probes one DNA strand for the presence of a lesion. If a lesion is found the UvrA subunits dissociate and the UvrB-DNA preincision complex is formed. This complex is subsequently bound by UvrC and the second UvrB is released. If no lesion is found, the DNA wraps around the other UvrB subunit that will check the other stand for damage. This chain is UvrABC system protein B, found in Treponema pallidum (strain Nichols).